A 395-amino-acid polypeptide reads, in one-letter code: WW domain-containing transcription regulator protein 1 (395 aa).

K46 is covalently cross-linked (Glycyl lysine isopeptide (Lys-Gly) (interchain with G-Cter in ubiquitin)). The tract at residues 52–116 (FFKEPDSGSH…AQQHAHLRQQ (65 aa)) is disordered. The segment covering 61–70 (HSRQSSTDSS) has biased composition (polar residues). S62 is modified (phosphoserine). Phosphoserine; by LATS2 is present on S89. The region spanning 124–157 (LPLPPGWEMTFTATGQRYFLNHIEKITTWQDPRK) is the WW domain. Residues 221 to 395 (PNALTTQQQQ…NKSEPFLTWL (175 aa)) form a required for interaction with PALS1 region. The stretch at 224–258 (LTTQQQQQQKLRLQRIQMERERIRMRQEELMRQEA) forms a coiled coil. Residues 277–293 (PAMSTDMRSVTNSSSDP) are compositionally biased toward polar residues. The interval 277 to 308 (PAMSTDMRSVTNSSSDPFLNGGPYHSREQSTD) is disordered. S290 carries the phosphoserine modification. S306 carries the post-translational modification Phosphoserine; by LATS2. The short motif at 389–395 (EPFLTWL) is the PDZ-binding element.

In terms of assembly, binds to SLC9A3R2 via the PDZ motif at the plasma membrane. Binds to YWHAZ in vivo and in vitro through the phosphoserine-binding motif RSHSSP. Interacts (via coiled-coil domain) with SMAD2 (via MH1 domain), SMAD3 and SMAD4. Interacts with MED15. Interacts with PAX8 and NKX2-1. Interacts with TEAD1, TEAD2, TEAD3 and TEAD4. Interacts (via WW domain) with PALS1. Interacts with LATS1. Interacts with YAP1 (when phosphorylated at 'Ser-112'). Interacts (via WW domain) with PRRG4 (via cytoplasmic domain). Interacts (via WW domain) with AMOTL2 (via PPXY motif); the interaction promotes WWTR1/TAZ localization to the cytoplasm and tight junctions, thereby inhibiting its transcriptional coactivator properties. Interacts (via WW domain) with AMOT; the interaction facilitates translocation of WWTR1/TAZ to the cytoplasm. In terms of processing, phosphorylated by LATS2 and STK3/MST2. Phosphorylation by LATS2 results in creation of 14-3-3 binding sites, retention in the cytoplasm, and functional inactivation. Phosphorylation results in the inhibition of transcriptional coactivation through YWHAZ-mediated nuclear export. Ubiquitinated at Lys-46; leading to proteasomal degradation. Deubiquitinated and stabilized by UCHL1 at Lys-46; leading to inhibition of osteoclastogenesis. As to expression, highly expressed in kidney, heart, placenta and lung.

It localises to the nucleus. Its subcellular location is the cytoplasm. It is found in the cell membrane. The protein resides in the cell junction. The protein localises to the tight junction. Transcriptional coactivator which acts as a downstream regulatory target in the Hippo signaling pathway that plays a pivotal role in organ size control and tumor suppression by restricting proliferation and promoting apoptosis. The core of this pathway is composed of a kinase cascade wherein STK3/MST2 and STK4/MST1, in complex with its regulatory protein SAV1, phosphorylates and activates LATS1/2 in complex with its regulatory protein MOB1, which in turn phosphorylates and inactivates YAP1 oncoprotein and WWTR1/TAZ. WWTR1 enhances PAX8 and NKX2-1/TTF1-dependent gene activation. In conjunction with YAP1, involved in the regulation of TGFB1-dependent SMAD2 and SMAD3 nuclear accumulation. Plays a key role in coupling SMADs to the transcriptional machinery such as the mediator complex. Regulates embryonic stem-cell self-renewal, promotes cell proliferation and epithelial-mesenchymal transition. The protein is WW domain-containing transcription regulator protein 1 of Mus musculus (Mouse).